We begin with the raw amino-acid sequence, 248 residues long: Pyridoxine 5'-phosphate synthase (248 aa).

A 3-amino-2-oxopropyl phosphate-binding site is contributed by N10. 12-13 provides a ligand contact to 1-deoxy-D-xylulose 5-phosphate; that stretch reads DH. R21 contacts 3-amino-2-oxopropyl phosphate. H46 functions as the Proton acceptor in the catalytic mechanism. 1-deoxy-D-xylulose 5-phosphate-binding residues include R48 and H53. The active-site Proton acceptor is E73. T103 lines the 1-deoxy-D-xylulose 5-phosphate pocket. H194 (proton donor) is an active-site residue. 3-amino-2-oxopropyl phosphate is bound by residues G195 and 216 to 217; that span reads GH.

This sequence belongs to the PNP synthase family. Homooctamer; tetramer of dimers.

It is found in the cytoplasm. It carries out the reaction 3-amino-2-oxopropyl phosphate + 1-deoxy-D-xylulose 5-phosphate = pyridoxine 5'-phosphate + phosphate + 2 H2O + H(+). It functions in the pathway cofactor biosynthesis; pyridoxine 5'-phosphate biosynthesis; pyridoxine 5'-phosphate from D-erythrose 4-phosphate: step 5/5. Catalyzes the complicated ring closure reaction between the two acyclic compounds 1-deoxy-D-xylulose-5-phosphate (DXP) and 3-amino-2-oxopropyl phosphate (1-amino-acetone-3-phosphate or AAP) to form pyridoxine 5'-phosphate (PNP) and inorganic phosphate. The sequence is that of Pyridoxine 5'-phosphate synthase from Legionella pneumophila (strain Paris).